Here is a 240-residue protein sequence, read N- to C-terminus: Cytochrome c-551 (240 aa).

Residues Cys-41, Cys-44, His-45, Cys-128, Cys-132, and His-133 each contribute to the heme c site.

In terms of processing, binds 2 heme c groups per subunit.

The protein is Cytochrome c-551 of Rhodocyclus tenuis (Rhodospirillum tenue).